Here is a 200-residue protein sequence, read N- to C-terminus: GTP cyclohydrolase-2 (200 aa).

49–53 contributes to the GTP binding site; it reads RVHSE. Zn(2+)-binding residues include cysteine 54, cysteine 65, and cysteine 67. GTP-binding positions include glutamine 70, 92–94, and threonine 114; that span reads EGR. Residue aspartate 126 is the Proton acceptor of the active site. Arginine 128 (nucleophile) is an active-site residue. GTP contacts are provided by threonine 149 and lysine 154.

Belongs to the GTP cyclohydrolase II family. As to quaternary structure, homodimer. Zn(2+) is required as a cofactor.

The catalysed reaction is GTP + 4 H2O = 2,5-diamino-6-hydroxy-4-(5-phosphoribosylamino)-pyrimidine + formate + 2 phosphate + 3 H(+). The protein operates within cofactor biosynthesis; riboflavin biosynthesis; 5-amino-6-(D-ribitylamino)uracil from GTP: step 1/4. In terms of biological role, catalyzes the conversion of GTP to 2,5-diamino-6-ribosylamino-4(3H)-pyrimidinone 5'-phosphate (DARP), formate and pyrophosphate. The sequence is that of GTP cyclohydrolase-2 from Klebsiella pneumoniae (strain 342).